Consider the following 291-residue polypeptide: Taste receptor type 2 member 16 (291 aa).

A topological domain (extracellular) is located at residue M1. The helical transmembrane segment at 2–22 (IPIQLTVFFMIIYVLESLTII) threads the bilayer. Topologically, residues 23 to 41 (VQSSLIVAVLGREWLQVRR) are cytoplasmic. A helical membrane pass occupies residues 42-62 (LMPVDMILISLGISRFCLQWA). Over 63-84 (SMLNNFCSYLNLNYVLCNLTIT) the chain is Extracellular. N-linked (GlcNAc...) asparagine glycosylation occurs at N80. A helical transmembrane segment spans residues 85-105 (WEFFNILTFWLNSLLTVFYCI). At 106–125 (KVSSFTHHIFLWVRWRILRW) the chain is on the cytoplasmic side. The chain crosses the membrane as a helical span at residues 126-146 (FPWILLGSLTIACVTIIPSAI). At 147–182 (GNYIQIQLLTMEHLPRNSTVTDRLEKFHQYQFQSHT) the chain is on the extracellular side. A glycan (N-linked (GlcNAc...) asparagine) is linked at N163. The helical transmembrane segment at 183 to 203 (VALVIPFILFLASTILLMASL) threads the bilayer. Residues 204-228 (TKQIQHHSTGHCNPSMKAHFTALRS) lie on the Cytoplasmic side of the membrane. A helical transmembrane segment spans residues 229 to 249 (LAILFIVFTSYFLIILITIIG). The Extracellular segment spans residues 250–257 (TLFDKRCW). A helical membrane pass occupies residues 258–278 (LWVWEAFVYAFILMHSTSLML). At 279 to 291 (SSPTLKRILKGKC) the chain is on the cytoplasmic side.

Belongs to the G-protein coupled receptor T2R family. Interacts with RTP3 and RTP4.

Its subcellular location is the cell membrane. Functionally, receptor that may play a role in the perception of bitterness and is gustducin-linked. May function as a bitter taste receptor for the phytonutrient beta glucopyranosides, some of which are toxic and some of which lower the risk of cancer and cardiovascular disease. The activity of this receptor may stimulate alpha gustducin, mediate PLC-beta-2 activation and lead to the gating of TRPM5. In Pongo pygmaeus (Bornean orangutan), this protein is Taste receptor type 2 member 16 (TAS2R16).